We begin with the raw amino-acid sequence, 561 residues long: CWF19-like protein mug161 (561 aa).

Residues 286–338 (QQTNKFHKSKSSTALFKSKKDSSSSLNKMHKSESHSALNNLHKSESGTSLNNR) form a disordered region. Ser296 carries the post-translational modification Phosphoserine. A Phosphothreonine modification is found at Thr298. Ser317, Ser319, Ser331, and Ser334 each carry phosphoserine. The segment covering 320–337 (HSALNNLHKSESGTSLNN) has biased composition (polar residues).

It belongs to the CWF19 family.

The protein localises to the nucleus. Functionally, has a role in meiosis. In Schizosaccharomyces pombe (strain 972 / ATCC 24843) (Fission yeast), this protein is CWF19-like protein mug161 (mug161).